Reading from the N-terminus, the 537-residue chain is MGATGAAEPLQSVLWVKQQRCAVSLEPARALLRWWRSPGPGAGAPGADACSVPVSEIIAVEETDVHGKHQGSGKWQKMEKPYAFTVHCVKRARRHRWKWAQVTFWCPEEQLCHLWLQTLREMLEKLTSRPKHLLVFINPFGGKGQGKRIYERKVAPLFTLASITTDIIVTEHANQAKETLYEINIDKYDGIVCVGGDGMFSEVLHGLIGRTQRSAGVDQNHPRAVLVPSSLRIGIIPAGSTDCVCYSTVGTSDAETSALHIVVGDSLAMDVSSVHHNSTLLRYSVSLLGYGFYGDIIKDSEKKRWLGLARYDFSGLKTFLSHHCYEGTVSFLPAQHTVGSPRDRKPCRAGCFVCRQSKQQLEEEQKKALYGLEAAEDVEEWQVVCGKFLAINATNMSCACRRSPRGLSPAAHLGDGSSDLILIRKCSRFNFLRFLIRHTNQQDQFDFTFVEVYRVKKFQFTSKHMEDEDSDLKEGGKKRFGHICSSHPSCCCTVSNSSWNCDGEVLHSPAIEVRVHCQLVRLFARGIEENPKPDSHS.

Residues 1 to 115 (MGATGAAEPL…CPEEQLCHLW (115 aa)) are essential for enzyme activity. A required for binding to sulfatide and phosphoinositides region spans residues 1 to 125 (MGATGAAEPL…LQTLREMLEK (125 aa)). One can recognise a DAGKc domain in the interval 128–278 (SRPKHLLVFI…MDVSSVHHNS (151 aa)). ATP is bound by residues 138-140 (NPF) and 170-174 (TEHAN). 195–198 (GGDG) lines the substrate pocket. Residue Asp-197 is the Proton donor/acceptor of the active site. Residues Glu-202, 239–241 (GST), Arg-304, and Arg-310 each bind ATP. 2 positions are modified to phosphoserine: Ser-340 and Ser-408. 502–504 (DGE) contacts ATP.

Ca(2+) serves as cofactor. The cofactor is Mg(2+). In terms of tissue distribution, high level expression in heart, brain, skeletal muscle, kidney and liver; moderate in peripheral blood leukocytes and thymus; very low in spleen, small intestine, placenta and lung.

It is found in the cytoplasm. It localises to the cell membrane. The catalysed reaction is an N-acylsphing-4-enine + ATP = an N-acylsphing-4-enine 1-phosphate + ADP + H(+). It catalyses the reaction N-(hexanoyl)sphing-4-enine + ATP = N-hexanoylsphing-4-enine 1-phosphate + ADP + H(+). It carries out the reaction N-(acetyl)-sphing-4-enine + ATP = N-(acetyl)-sphing-4-enine-1-phosphate + ADP + H(+). The enzyme catalyses N-hexadecanoylsphing-4-enine + ATP = N-(hexadecanoyl)-sphing-4-enine-1-phosphate + ADP + H(+). The catalysed reaction is N-hexanoyl-(4R)-hydroxysphinganine + ATP = N-hexanoyl-(4R)-hydroxysphinganine-1-phosphate + ADP + H(+). Its activity is regulated as follows. Inhibited by sulfatide. Inhibited by sphinganine, sphingenine, and N,N-Dimethylsphingosine (DMS). Cardiolipin at 0.1 uM significantly increases activity, whereas at concentrations &gt;1 uM has an inhibitory effect. In terms of biological role, catalyzes specifically the phosphorylation of ceramide to form ceramide 1-phosphate. Acts efficiently on natural and analog ceramides (C6, C8, C16 ceramides, and C8-dihydroceramide), to a lesser extent on C2-ceramide and C6-dihydroceramide, but not on other lipids, such as various sphingosines. Shows a greater preference for D-erythro isomer of ceramides. Binds phosphoinositides. The sequence is that of Ceramide kinase (CERK) from Homo sapiens (Human).